The chain runs to 84 residues: uncharacterized protein (84 aa).

This protein may be involved in virus assembly. This is an uncharacterized protein from Saccharolobus solfataricus (Sulfolobus solfataricus).